We begin with the raw amino-acid sequence, 800 residues long: Nucleolar complex protein 3 homolog (800 aa).

Residues 37 to 90 (STIKKYRKEQRKLRQAVKDAVSKKPFPLEDPKSKRPVKGMEREEEDEEDQALPL) form a disordered region. The segment covering 40-51 (KKYRKEQRKLRQ) has biased composition (basic residues). The segment covering 52–77 (AVKDAVSKKPFPLEDPKSKRPVKGME) has biased composition (basic and acidic residues). The segment covering 78-90 (REEEDEEDQALPL) has biased composition (acidic residues). A Glycyl lysine isopeptide (Lys-Gly) (interchain with G-Cter in SUMO2) cross-link involves residue K333. Positions 450–489 (FKEKRKTLSRMQRKWKKAEEKLERELREAEASESTERKLK) form a coiled coil.

It belongs to the CBF/MAK21 family.

It is found in the nucleus. Its subcellular location is the nucleolus. In Cricetulus griseus (Chinese hamster), this protein is Nucleolar complex protein 3 homolog (NOC3L).